The sequence spans 408 residues: RNA-splicing ligase RtcB1 (408 aa).

Mn(2+) is bound by residues D75, C78, H168, H185, and H281. Position 167–171 (167–171 (NHFIE)) interacts with GMP. GMP is bound by residues 281–282 (HN), 313–316 (PGSM), S320, 337–340 (HGAG), and K407. H337 functions as the GMP-histidine intermediate in the catalytic mechanism.

The protein belongs to the RtcB family. As to quaternary structure, monomer. Requires Mn(2+) as cofactor.

The enzyme catalyses a 3'-end 3'-phospho-ribonucleotide-RNA + a 5'-end dephospho-ribonucleoside-RNA + GTP = a ribonucleotidyl-ribonucleotide-RNA + GMP + diphosphate. It catalyses the reaction a 3'-end 2',3'-cyclophospho-ribonucleotide-RNA + a 5'-end dephospho-ribonucleoside-RNA + GTP + H2O = a ribonucleotidyl-ribonucleotide-RNA + GMP + diphosphate + H(+). GTP-dependent RNA ligase that is involved in RNA repair. Joins RNA with 2',3'-cyclic-phosphate or 3'-phosphate ends to RNA with 5'-hydroxy ends. GTP-dependent RNA ligase that is involved in tRNA repair. Repairs broken tRNA(Asp) and tRNA(Arg) that have been cleaved by colicin E5 or colicin D, respectively. Does not repair damaged 16S rRNA in 30S ribosomal subunits. This is RNA-splicing ligase RtcB1 from Escherichia coli (strain ATCC 25922 / DSM 1103 / LMG 8223 / NCIMB 12210 / NCTC 12241 / WDCM 00013 / Seattle 1946).